Here is a 797-residue protein sequence, read N- to C-terminus: Discoidin domain-containing receptor tyrosine kinase B (797 aa).

A signal peptide spans 1 to 19 (MKLLLYLFGVTFHSNTVVA). The Extracellular portion of the chain corresponds to 20–384 (LELRECSHQL…VTEHDDGTSM (365 aa)). One can recognise an F5/8 type C domain in the interval 25-181 (CSHQLGMSNR…VCMRVEVFGC (157 aa)). Residues Cys-25 and Cys-181 are joined by a disulfide bond. The segment at 46-66 (SFDLQSTGPQHARAHQESGSG) is disordered. N-linked (GlcNAc...) asparagine glycans are attached at residues Asn-141, Asn-167, Asn-264, and Asn-353. A helical transmembrane segment spans residues 385-405 (FAFIIFFFMFLIVAVIILTVL). Residues 406–797 (YRKREYRVKA…LVHTSPHIHF (392 aa)) are Cytoplasmic-facing. Residues 527 to 785 (LICVSRIGQG…PSFENVHLHL (259 aa)) form the Protein kinase domain. Residues 533 to 541 (IGQGEFGEV) and Lys-554 contribute to the ATP site. Asp-645 functions as the Proton acceptor in the catalytic mechanism.

The protein belongs to the protein kinase superfamily. Tyr protein kinase family. Insulin receptor subfamily. As to quaternary structure, interacts with shc-1. Post-translationally, autophosphorylated on tyrosine residues. In terms of processing, N-glycosylation at Asn-141 is required for axon regeneration after injury but is dispensable for kinase activity and axon localization. As to expression, expressed in some neurons in head and tail, some motoneurons in ventral nerve cord, in PVP interneurons, seam cells, rectal gland cells, vulva cells and some non-neuronal cells in the tail. Expressed in D-type motor neurons.

The protein localises to the cell membrane. It is found in the cell projection. The protein resides in the axon. It localises to the perikaryon. The enzyme catalyses L-tyrosyl-[protein] + ATP = O-phospho-L-tyrosyl-[protein] + ADP + H(+). Functionally, tyrosine-protein kinase receptor which, together with ddr-1, is involved in axon guidance to establish the tracts for the ventral and dorsal nerve cords during nervous system development. Acts upstream of the adapter shc-1, and the tyrosine kinase receptors svh-1 and svh-2 to regulate axon regeneration following injury in D-type motor neurons. May mediate axon regeneration in association with the collagen emb-9. The polypeptide is Discoidin domain-containing receptor tyrosine kinase B (Caenorhabditis elegans).